The primary structure comprises 283 residues: ATP phosphoribosyltransferase (283 aa).

It belongs to the ATP phosphoribosyltransferase family. Long subfamily. Requires Mg(2+) as cofactor.

Its subcellular location is the cytoplasm. The enzyme catalyses 1-(5-phospho-beta-D-ribosyl)-ATP + diphosphate = 5-phospho-alpha-D-ribose 1-diphosphate + ATP. Its pathway is amino-acid biosynthesis; L-histidine biosynthesis; L-histidine from 5-phospho-alpha-D-ribose 1-diphosphate: step 1/9. Its activity is regulated as follows. Feedback inhibited by histidine. Catalyzes the condensation of ATP and 5-phosphoribose 1-diphosphate to form N'-(5'-phosphoribosyl)-ATP (PR-ATP). Has a crucial role in the pathway because the rate of histidine biosynthesis seems to be controlled primarily by regulation of HisG enzymatic activity. This chain is ATP phosphoribosyltransferase, found in Rhodococcus erythropolis (strain PR4 / NBRC 100887).